The sequence spans 152 residues: UPF0266 membrane protein YobD (152 aa).

3 consecutive transmembrane segments (helical) span residues 6 to 26 (LVLI…QFIM), 45 to 65 (VDSV…VTSH), and 67 to 87 (AQMT…IFWI).

The protein belongs to the UPF0266 family.

Its subcellular location is the cell inner membrane. In Salmonella paratyphi B (strain ATCC BAA-1250 / SPB7), this protein is UPF0266 membrane protein YobD.